Here is a 189-residue protein sequence, read N- to C-terminus: UPF0398 protein lp_1753 (189 aa).

This sequence belongs to the UPF0398 family.

This Lactiplantibacillus plantarum (strain ATCC BAA-793 / NCIMB 8826 / WCFS1) (Lactobacillus plantarum) protein is UPF0398 protein lp_1753.